We begin with the raw amino-acid sequence, 200 residues long: Ciliary neurotrophic factor (200 aa).

This sequence belongs to the CNTF family. Nervous system.

Its subcellular location is the cytoplasm. CNTF is a survival factor for various neuronal cell types. Seems to prevent the degeneration of motor axons after axotomy. The protein is Ciliary neurotrophic factor (Cntf) of Rattus norvegicus (Rat).